The following is a 650-amino-acid chain: Flap endonuclease 1 (650 aa).

The N-domain stretch occupies residues Met1–Arg106. Asp34 is a binding site for Mg(2+). DNA contacts are provided by Arg47 and Arg72. Residues Asp88, Glu160, Glu162, Asp181, and Asp183 each contribute to the Mg(2+) site. Residues Glu124–Tyr266 form an I-domain region. Glu160 is a binding site for DNA. DNA-binding residues include Gly244 and Asp246. Asp246 contributes to the Mg(2+) binding site. The interval Thr349–Phe357 is interaction with PCNA. Positions Glu371–Asn592 are disordered. 3 stretches are compositionally biased toward basic and acidic residues: residues Met413 to Leu469, Asp478 to Asn502, and Asp511 to Ile524. A compositionally biased stretch (low complexity) spans Ser525–Ser562. The span at Leu565 to Ser581 shows a compositional bias: basic and acidic residues. A compositionally biased stretch (low complexity) spans Pro582–Asn592.

This sequence belongs to the XPG/RAD2 endonuclease family. FEN1 subfamily. Interacts with PCNA1 and PCNA2. Three molecules of FEN1 bind to one PCNA trimer with each molecule binding to one PCNA monomer. PCNA stimulates the nuclease activity without altering cleavage specificity. Mg(2+) serves as cofactor. Phosphorylated. Phosphorylation upon DNA damage induces relocalization to the nuclear plasma.

Its subcellular location is the nucleus. It localises to the nucleolus. It is found in the nucleoplasm. The protein resides in the mitochondrion. With respect to regulation, inhibited by monovalent metal ions. In terms of biological role, structure-specific nuclease with 5'-flap endonuclease and 5'-3' exonuclease activities involved in DNA replication and repair. During DNA replication, cleaves the 5'-overhanging flap structure that is generated by displacement synthesis when DNA polymerase encounters the 5'-end of a downstream Okazaki fragment. It enters the flap from the 5'-end and then tracks to cleave the flap base, leaving a nick for ligation. Also involved in the long patch base excision repair (LP-BER) pathway, by cleaving within the apurinic/apyrimidinic (AP) site-terminated flap. Acts as a genome stabilization factor that prevents flaps from equilibrating into structures that lead to duplications and deletions. Also possesses 5'-3' exonuclease activity on nicked or gapped double-stranded DNA, and exhibits RNase H activity. Also involved in replication and repair of rDNA and in repairing mitochondrial DNA. The polypeptide is Flap endonuclease 1 (Plasmodium falciparum).